A 334-amino-acid chain; its full sequence is Leukocyte cell-derived chemotaxin 1 (334 aa).

Residues 46 to 66 (VVLISGAVLLLFGAIGAFYFW) form a helical membrane-spanning segment. In terms of domain architecture, BRICHOS spans 105–201 (GSGAEEAIEV…LCGDLPIFWL (97 aa)). Cysteines 132 and 193 form a disulfide. A propeptide spanning residues 211–214 (RERR) is cleaved from the precursor. Residues 212–270 (ERREVVRNSAPSTTRRPHSEPRGNAGPGRLSNGTRPNVQDDAEPFNPDNPYHQQEGESM) form a disordered region. A glycan (N-linked (GlcNAc...) asparagine) is linked at asparagine 243. Intrachain disulfides connect cysteine 282-cysteine 286, cysteine 283-cysteine 323, cysteine 293-cysteine 317, and cysteine 297-cysteine 313.

It belongs to the chondromodulin-1 family. After cleavage, the post-translationally modified ChM-I is secreted as a glycoprotein. Detected in the four cardiac valves, valvular interstitial cells and extracellular matrix (at protein level).

Its subcellular location is the secreted. It localises to the extracellular space. It is found in the extracellular matrix. The protein resides in the endomembrane system. Bifunctional growth regulator that stimulates the growth of cultured chondrocytes in the presence of basic fibroblast growth factor (FGF) but inhibits the growth of cultured vascular endothelial cells. May contribute to the rapid growth of cartilage and vascular invasion prior to the replacement of cartilage by bone during endochondral bone development. Inhibits in vitro tube formation and mobilization of endothelial cells. Plays a role as antiangiogenic factor in cardiac valves to suppress neovascularization. The protein is Leukocyte cell-derived chemotaxin 1 of Mus musculus (Mouse).